The sequence spans 466 residues: 3-isopropylmalate dehydratase large subunit (466 aa).

The [4Fe-4S] cluster site is built by cysteine 347, cysteine 407, and cysteine 410.

Belongs to the aconitase/IPM isomerase family. LeuC type 1 subfamily. In terms of assembly, heterodimer of LeuC and LeuD. The cofactor is [4Fe-4S] cluster.

It carries out the reaction (2R,3S)-3-isopropylmalate = (2S)-2-isopropylmalate. It participates in amino-acid biosynthesis; L-leucine biosynthesis; L-leucine from 3-methyl-2-oxobutanoate: step 2/4. Its function is as follows. Catalyzes the isomerization between 2-isopropylmalate and 3-isopropylmalate, via the formation of 2-isopropylmaleate. This Escherichia coli O9:H4 (strain HS) protein is 3-isopropylmalate dehydratase large subunit.